Consider the following 317-residue polypeptide: Adenine deaminase (317 aa).

The Zn(2+) site is built by His14, His16, and His194. The active-site Proton donor is Glu197. Residue Asp275 coordinates Zn(2+). Asp276 provides a ligand contact to substrate.

The protein belongs to the metallo-dependent hydrolases superfamily. Adenosine and AMP deaminases family. Adenine deaminase type 2 subfamily. Requires Zn(2+) as cofactor.

The enzyme catalyses adenine + H2O + H(+) = hypoxanthine + NH4(+). Its function is as follows. Catalyzes the hydrolytic deamination of adenine to hypoxanthine. Plays an important role in the purine salvage pathway and in nitrogen catabolism. This Pseudomonas savastanoi pv. phaseolicola (strain 1448A / Race 6) (Pseudomonas syringae pv. phaseolicola (strain 1448A / Race 6)) protein is Adenine deaminase.